The chain runs to 1025 residues: Probable beta-galactosidase B (1025 aa).

Positions Met1–Ala21 are cleaved as a signal peptide. Residue Asn23 is glycosylated (N-linked (GlcNAc...) asparagine). Tyr90 provides a ligand contact to substrate. N-linked (GlcNAc...) asparagine glycosylation occurs at Asn100. Substrate contacts are provided by Asn135, Ala136, Glu137, and Asn195. Glu196 acts as the Proton donor in catalysis. Residue Asn211 is glycosylated (N-linked (GlcNAc...) asparagine). Tyr265 provides a ligand contact to substrate. A disulfide bond links Cys271 and Cys324. Glu308 functions as the Nucleophile in the catalytic mechanism. Tyr373 provides a ligand contact to substrate. N-linked (GlcNAc...) asparagine glycans are attached at residues Asn411, Asn456, Asn736, Asn776, Asn884, Asn925, and Asn926.

Belongs to the glycosyl hydrolase 35 family.

It localises to the secreted. It catalyses the reaction Hydrolysis of terminal non-reducing beta-D-galactose residues in beta-D-galactosides.. Its function is as follows. Cleaves beta-linked terminal galactosyl residues from gangliosides, glycoproteins, and glycosaminoglycans. The chain is Probable beta-galactosidase B (lacB) from Emericella nidulans (strain FGSC A4 / ATCC 38163 / CBS 112.46 / NRRL 194 / M139) (Aspergillus nidulans).